A 347-amino-acid polypeptide reads, in one-letter code: Probable dual-specificity RNA methyltransferase RlmN (347 aa).

Residue E93 is the Proton acceptor of the active site. In terms of domain architecture, Radical SAM core spans 100–323; it reads KAKRKTACVS…KKAGLNISTR (224 aa). An intrachain disulfide couples C107 to C334. Residues C114, C118, and C121 each contribute to the [4Fe-4S] cluster site. Residues 160–161, S192, 215–217, and N291 contribute to the S-adenosyl-L-methionine site; these read GE and SLT. Residue C334 is the S-methylcysteine intermediate of the active site.

Belongs to the radical SAM superfamily. RlmN family. [4Fe-4S] cluster is required as a cofactor.

It is found in the cytoplasm. The enzyme catalyses adenosine(2503) in 23S rRNA + 2 reduced [2Fe-2S]-[ferredoxin] + 2 S-adenosyl-L-methionine = 2-methyladenosine(2503) in 23S rRNA + 5'-deoxyadenosine + L-methionine + 2 oxidized [2Fe-2S]-[ferredoxin] + S-adenosyl-L-homocysteine. It carries out the reaction adenosine(37) in tRNA + 2 reduced [2Fe-2S]-[ferredoxin] + 2 S-adenosyl-L-methionine = 2-methyladenosine(37) in tRNA + 5'-deoxyadenosine + L-methionine + 2 oxidized [2Fe-2S]-[ferredoxin] + S-adenosyl-L-homocysteine. Specifically methylates position 2 of adenine 2503 in 23S rRNA and position 2 of adenine 37 in tRNAs. In Treponema denticola (strain ATCC 35405 / DSM 14222 / CIP 103919 / JCM 8153 / KCTC 15104), this protein is Probable dual-specificity RNA methyltransferase RlmN.